The sequence spans 637 residues: tRNA uridine 5-carboxymethylaminomethyl modification enzyme MnmG (637 aa).

FAD contacts are provided by residues G15–G20, V127, and S182. Position 274–288 (G274–F288) interacts with NAD(+). An FAD-binding site is contributed by Q371.

It belongs to the MnmG family. As to quaternary structure, homodimer. Heterotetramer of two MnmE and two MnmG subunits. The cofactor is FAD.

The protein localises to the cytoplasm. In terms of biological role, NAD-binding protein involved in the addition of a carboxymethylaminomethyl (cmnm) group at the wobble position (U34) of certain tRNAs, forming tRNA-cmnm(5)s(2)U34. The polypeptide is tRNA uridine 5-carboxymethylaminomethyl modification enzyme MnmG (Heliobacterium modesticaldum (strain ATCC 51547 / Ice1)).